Reading from the N-terminus, the 728-residue chain is Methionine--tRNA ligase (728 aa).

Positions 13 to 23 match the 'HIGH' region motif; it reads PYANGSIHLGH. The Zn(2+) site is built by Cys-144, Cys-147, Cys-157, and Cys-160. The 'KMSKS' region signature appears at 348-352; the sequence is KMSKS. Lys-351 serves as a coordination point for ATP. Positions 585–620 are disordered; the sequence is LAPAKSQQVAQAVETMEKNSSTTPAPAKEGEAGQAS. The region spanning 628–728 is the tRNA-binding domain; sequence DFGKIDLRVA…EGARPGMKVK (101 aa).

Belongs to the class-I aminoacyl-tRNA synthetase family. MetG type 1 subfamily. As to quaternary structure, homodimer. Zn(2+) serves as cofactor.

It is found in the cytoplasm. It carries out the reaction tRNA(Met) + L-methionine + ATP = L-methionyl-tRNA(Met) + AMP + diphosphate. Is required not only for elongation of protein synthesis but also for the initiation of all mRNA translation through initiator tRNA(fMet) aminoacylation. The sequence is that of Methionine--tRNA ligase from Nitrosospira multiformis (strain ATCC 25196 / NCIMB 11849 / C 71).